The sequence spans 434 residues: D-amino acid dehydrogenase (434 aa).

3 to 17 contributes to the FAD binding site; that stretch reads VVILGSGVVGVASAW.

It belongs to the DadA oxidoreductase family. FAD is required as a cofactor.

The catalysed reaction is a D-alpha-amino acid + A + H2O = a 2-oxocarboxylate + AH2 + NH4(+). It functions in the pathway amino-acid degradation; D-alanine degradation; NH(3) and pyruvate from D-alanine: step 1/1. Functionally, oxidative deamination of D-amino acids. The chain is D-amino acid dehydrogenase from Yersinia enterocolitica serotype O:8 / biotype 1B (strain NCTC 13174 / 8081).